A 352-amino-acid chain; its full sequence is N-acetyl-gamma-glutamyl-phosphate reductase (352 aa).

The active site involves Cys155.

This sequence belongs to the NAGSA dehydrogenase family. Type 1 subfamily.

It localises to the cytoplasm. It catalyses the reaction N-acetyl-L-glutamate 5-semialdehyde + phosphate + NADP(+) = N-acetyl-L-glutamyl 5-phosphate + NADPH + H(+). The protein operates within amino-acid biosynthesis; L-arginine biosynthesis; N(2)-acetyl-L-ornithine from L-glutamate: step 3/4. Its function is as follows. Catalyzes the NADPH-dependent reduction of N-acetyl-5-glutamyl phosphate to yield N-acetyl-L-glutamate 5-semialdehyde. This is N-acetyl-gamma-glutamyl-phosphate reductase from Brachyspira hyodysenteriae (strain ATCC 49526 / WA1).